Reading from the N-terminus, the 61-residue chain is Small ribosomal subunit protein uS14 (61 aa).

Zn(2+) contacts are provided by cysteine 24, cysteine 27, cysteine 40, and cysteine 43.

The protein belongs to the universal ribosomal protein uS14 family. Zinc-binding uS14 subfamily. In terms of assembly, part of the 30S ribosomal subunit. Contacts proteins S3 and S10. Requires Zn(2+) as cofactor.

In terms of biological role, binds 16S rRNA, required for the assembly of 30S particles and may also be responsible for determining the conformation of the 16S rRNA at the A site. This Treponema denticola (strain ATCC 35405 / DSM 14222 / CIP 103919 / JCM 8153 / KCTC 15104) protein is Small ribosomal subunit protein uS14.